Consider the following 85-residue polypeptide: U4-theraphotoxin-Hhn1a (85 aa).

The N-terminal stretch at 1 to 22 is a signal peptide; that stretch reads MKVTLIAILTCAAVLVLHTTAA. Positions 23-48 are excised as a propeptide; sequence EELEAEGQLMEVGMPDTELAAVDEER. Intrachain disulfides connect Cys52/Cys66, Cys56/Cys77, and Cys71/Cys82.

The protein belongs to the neurotoxin 12 (Hwtx-2) family. 02 (Hwtx-2) subfamily. As to quaternary structure, monomer. In terms of tissue distribution, expressed by the venom gland.

It is found in the secreted. In terms of biological role, neurotoxin active on both insects and mammals. The sequence is that of U4-theraphotoxin-Hhn1a from Cyriopagopus hainanus (Chinese bird spider).